A 316-amino-acid polypeptide reads, in one-letter code: Annexin D7 (316 aa).

Ala-2 bears the N-acetylalanine mark. 4 Annexin repeats span residues 11–82, 83–154, 166–237, and 241–312; these read PLPE…LWTF, EPAE…PLVS, TLAR…AVIK, and YPEK…ALLG. Ca(2+) contacts are provided by Phe-24, Gly-26, Gly-28, and Glu-68. Phosphoserine is present on Ser-95. Phosphothreonine is present on residues Thr-100 and Thr-112. Tyr-129 bears the Phosphotyrosine mark. Ca(2+) is bound by residues Ile-254 and Gly-258. Tyr-283 is subject to Phosphotyrosine. A Phosphoserine modification is found at Ser-288. Ca(2+) contacts are provided by Asp-298, Thr-299, and Glu-304.

The protein belongs to the annexin (TC 1.A.31.1) family. In terms of tissue distribution, expressed in flowers.

The sequence is that of Annexin D7 (ANNAT7) from Arabidopsis thaliana (Mouse-ear cress).